The chain runs to 357 residues: Arginine kinase (357 aa).

Residue Ala-2 is modified to N-acetylalanine. The region spanning 9 to 91 (KLEEGFKKLQ…FDPIIEDYHK (83 aa)) is the Phosphagen kinase N-terminal domain. Residue 64-68 (GVGVY) coordinates L-arginine. In terms of domain architecture, Phosphagen kinase C-terminal spans 119 to 356 (FVISTRVRCG…LELIKIEKEM (238 aa)). Residues 122-126 (STRVR) and His-185 contribute to the ATP site. Glu-225 contacts L-arginine. An ATP-binding site is contributed by Arg-229. Residue Cys-271 coordinates L-arginine. Residues 280–284 (RASVH) and 309–314 (RGTRGE) contribute to the ATP site. An L-arginine-binding site is contributed by Glu-314.

The protein belongs to the ATP:guanido phosphotransferase family.

The enzyme catalyses L-arginine + ATP = N(omega)-phospho-L-arginine + ADP + H(+). This chain is Arginine kinase, found in Pachygrapsus marmoratus (Marbled rock crab).